Consider the following 1775-residue polypeptide: Protein TIC 214 (1775 aa).

A run of 6 helical transmembrane segments spans residues isoleucine 19–glycine 39, phenylalanine 68–leucine 88, proline 91–histidine 111, valine 133–leucine 153, valine 176–isoleucine 196, and isoleucine 227–isoleucine 247. The disordered stretch occupies residues lysine 1491–alanine 1512.

It belongs to the TIC214 family. In terms of assembly, part of the Tic complex.

The protein localises to the plastid. Its subcellular location is the chloroplast inner membrane. Involved in protein precursor import into chloroplasts. May be part of an intermediate translocation complex acting as a protein-conducting channel at the inner envelope. The chain is Protein TIC 214 from Lobularia maritima (Sweet alyssum).